The sequence spans 428 residues: Histidine--tRNA ligase (428 aa).

It belongs to the class-II aminoacyl-tRNA synthetase family. As to quaternary structure, homodimer.

It localises to the cytoplasm. It carries out the reaction tRNA(His) + L-histidine + ATP = L-histidyl-tRNA(His) + AMP + diphosphate + H(+). In Halalkalibacterium halodurans (strain ATCC BAA-125 / DSM 18197 / FERM 7344 / JCM 9153 / C-125) (Bacillus halodurans), this protein is Histidine--tRNA ligase.